Consider the following 249-residue polypeptide: MADYNVSMRDLLQAGAHFGHQTRFWNPKMRQYIFGARNKIHIINLEHTVPALNDALNFANQLASKKNKVLFVGTKRAASNIIREQAQRAGQPYVDHRWLGGMLTNWKTLRQSINRLKDLQTQSQDGTFAKLTKREALERTREMEKLERSLGGVKNMGGLPDALFVIDVDHEAIAIKEAKNLGIPVIGIVDTNSNPDNVDYVIPGNDDAIRAVTLYASAMADAILAGKEYAQSQANAQAKGEEAPAASEA.

Belongs to the universal ribosomal protein uS2 family.

The sequence is that of Small ribosomal subunit protein uS2 from Acinetobacter baylyi (strain ATCC 33305 / BD413 / ADP1).